We begin with the raw amino-acid sequence, 367 residues long: Cobalt-precorrin-5B C(1)-methyltransferase (367 aa).

Belongs to the CbiD family.

The catalysed reaction is Co-precorrin-5B + S-adenosyl-L-methionine = Co-precorrin-6A + S-adenosyl-L-homocysteine. It functions in the pathway cofactor biosynthesis; adenosylcobalamin biosynthesis; cob(II)yrinate a,c-diamide from sirohydrochlorin (anaerobic route): step 6/10. Functionally, catalyzes the methylation of C-1 in cobalt-precorrin-5B to form cobalt-precorrin-6A. The protein is Cobalt-precorrin-5B C(1)-methyltransferase of Priestia megaterium (Bacillus megaterium).